The following is a 151-amino-acid chain: NADPH-dependent 7-cyano-7-deazaguanine reductase (151 aa).

Catalysis depends on C49, which acts as the Thioimide intermediate. The active-site Proton donor is D56. Residues 71–73 (IES) and 90–91 (HE) contribute to the substrate site.

This sequence belongs to the GTP cyclohydrolase I family. QueF type 1 subfamily.

Its subcellular location is the cytoplasm. The catalysed reaction is 7-aminomethyl-7-carbaguanine + 2 NADP(+) = 7-cyano-7-deazaguanine + 2 NADPH + 3 H(+). The protein operates within tRNA modification; tRNA-queuosine biosynthesis. Its function is as follows. Catalyzes the NADPH-dependent reduction of 7-cyano-7-deazaguanine (preQ0) to 7-aminomethyl-7-deazaguanine (preQ1). This chain is NADPH-dependent 7-cyano-7-deazaguanine reductase, found in Caulobacter vibrioides (strain ATCC 19089 / CIP 103742 / CB 15) (Caulobacter crescentus).